We begin with the raw amino-acid sequence, 165 residues long: Ribosome maturation factor RimM (165 aa).

The PRC barrel domain maps to 94–165; sequence EDEFYIADLN…YVVLNYQREI (72 aa).

This sequence belongs to the RimM family. Binds ribosomal protein uS19.

Its subcellular location is the cytoplasm. Its function is as follows. An accessory protein needed during the final step in the assembly of 30S ribosomal subunit, possibly for assembly of the head region. Essential for efficient processing of 16S rRNA. May be needed both before and after RbfA during the maturation of 16S rRNA. It has affinity for free ribosomal 30S subunits but not for 70S ribosomes. This is Ribosome maturation factor RimM from Rickettsia felis (strain ATCC VR-1525 / URRWXCal2) (Rickettsia azadi).